The chain runs to 242 residues: ATP synthase subunit a (242 aa).

6 helical membrane-spanning segments follow: residues 29-49 (SAVAMIFVSIAASMLLITAFV), 84-104 (FFPLILTLFLFISLGNILGMV), 114-134 (IIVTFSLAMIVFTTTLVYGIY), 140-160 (FFSLFLPKNIPLWLAPIMVII), 181-201 (VAGHILLKIIAWSIVSLTWLF), and 206-226 (IALVIVLIGFELFISILQAYI).

This sequence belongs to the ATPase A chain family. F-type ATPases have 2 components, CF(1) - the catalytic core - and CF(0) - the membrane proton channel. CF(1) has five subunits: alpha(3), beta(3), gamma(1), delta(1), epsilon(1). CF(0) has three main subunits: a(1), b(2) and c(9-12). The alpha and beta chains form an alternating ring which encloses part of the gamma chain. CF(1) is attached to CF(0) by a central stalk formed by the gamma and epsilon chains, while a peripheral stalk is formed by the delta and b chains.

It localises to the cell inner membrane. Functionally, key component of the proton channel; it plays a direct role in the translocation of protons across the membrane. The polypeptide is ATP synthase subunit a (Orientia tsutsugamushi (strain Ikeda) (Rickettsia tsutsugamushi)).